Here is a 611-residue protein sequence, read N- to C-terminus: Pyrichalasin H cluster regulator pyiR (611 aa).

Residues Cys11–Cys47 constitute a DNA-binding region (zn(2)-C6 fungal-type). Disordered stretches follow at residues Leu53 to Trp128, Ala169 to Thr192, Gly265 to Ser291, Ala401 to Gln427, Arg521 to Arg550, and Ser564 to Glu593. The segment covering Gly59 to Thr69 has biased composition (basic and acidic residues). Residues Pro98 to Arg109 are compositionally biased toward low complexity. Over residues Gly265 to Gln279 the composition is skewed to polar residues. The segment covering Gly572–Asn587 has biased composition (gly residues).

It localises to the nucleus. Transcription factor that specifically regulates the expression of the gene cluster that mediates the biosynthesis of the mycotoxin pyrichalasin H, a tyrosine-derived cytochalasan that inhibits the growth of rice seedlings, but also inhibits lymphocyte capping and actin polymerization and alters cell morphology. Pyrichalasin H is indicated as the responsible agent for the genus-specific pathogenicity of M.grisea toward crabgrass. The sequence is that of Pyrichalasin H cluster regulator pyiR from Pyricularia grisea (Crabgrass-specific blast fungus).